We begin with the raw amino-acid sequence, 928 residues long: Retinoblastoma-associated protein (928 aa).

The segment at 1 to 42 (MPPKTPRKTAATAAAAAAEPPAPPPPPPPEEDPEQDSGPEDL) is disordered. Pro2 is subject to N,N-dimethylproline. The segment covering 8–19 (KTAATAAAAAAE) has biased composition (low complexity). A compositionally biased stretch (acidic residues) spans 29–39 (PEEDPEQDSGP). Residue Ser37 is modified to Phosphoserine. Phosphoserine; by CDK1 is present on Ser249. Thr252 is modified (phosphothreonine; by CDK1). Thr356 is modified (phosphothreonine). Position 373 is a phosphothreonine; by CDK1 (Thr373). Residues 373 to 579 (TPVRTVMNTI…FDLIKQSKDR (207 aa)) are domain A. Residues 373-771 (TPVRTVMNTI…QRLKTNILQY (399 aa)) form a pocket; binds T and E1A region. Position 567 is a phosphoserine; by CDK2 (Ser567). Residues 580–639 (EGPTDHLESACPLNLPLQNNHTAADMYLSPVRSPKKKGSTTRVNSTANAETQATSAFQTQ) are spacer. A Phosphoserine modification is found at Ser608. A disordered region spans residues 610-632 (VRSPKKKGSTTRVNSTANAETQA). Ser612 carries the phosphoserine; by CHEK2 and CHEK1 modification. Polar residues predominate over residues 619-632 (TTRVNSTANAETQA). Position 624 is a phosphoserine (Ser624). Residues 640-771 (KPLKSTSLSL…QRLKTNILQY (132 aa)) form a domain B region. Residues 763-928 (RLKTNILQYA…SMDTSNKEEK (166 aa)) are interaction with LIMD1. The segment at 771–928 (YASTRPPTLS…SMDTSNKEEK (158 aa)) is domain C; mediates interaction with E4F1. A phosphoserine mark is found at Ser780, Ser788, and Ser795. Phosphoserine; by CDK1 and CDK3 is present on Ser807. The residue at position 810 (Lys810) is an N6-methyllysine; by SMYD2. A Phosphoserine; by CDK1 and CDK3 modification is found at Ser811. Thr821 carries the phosphothreonine; by CDK6 modification. At Thr823 the chain carries Phosphothreonine. Thr826 carries the phosphothreonine; by CDK4 modification. Phosphothreonine is present on Thr841. The residue at position 855 (Ser855) is a Phosphoserine. The residue at position 860 (Lys860) is an N6-methyllysine; by SMYD2. The Bipartite nuclear localization signal signature appears at 860–876 (KRSAEGSNPPKPLKKLR). The tract at residues 860 to 928 (KRSAEGSNPP…SMDTSNKEEK (69 aa)) is disordered. Lys873 and Lys874 each carry N6-acetyllysine; by PCAF. Residues 915–928 (KMNDSMDTSNKEEK) are compositionally biased toward basic and acidic residues.

It belongs to the retinoblastoma protein (RB) family. In terms of assembly, the hypophosphorylated form interacts with and sequesters the E2F1 transcription factor, thereby inhibiting E2F1 transcription. Interacts with heterodimeric E2F/DP transcription factor complexes containing TFDP1 and either E2F1, E2F3, E2F4 or E2F5, or TFDP2 and E2F4. Interacts (when hyperphosphorylated and hypophosphorylated) with PKP3; the interaction inhibits RB1 interaction with and repression of the transcription factor E2F1, potentially via sequestering RB1 to the cytoplasm. The unphosphorylated form interacts with EID1, ARID3B, KDM5A, SUV39H1, MJD2A/JHDM3A and THOC1. Interacts with the N-terminal domain of TAF1. Interacts with SNW1, ATAD5, AATF, DNMT1, LIN9, LMNA, KMT5B, KMT5C, PELP1, UHRF2 and TMPO-alpha. Interacts with GRIP1 and UBR4. Interacts with ARID4A and KDM5B. Interacts with E4F1 and LIMD1. Interacts with SMARCA4/BRG1 and HDAC1. Interacts with PSMA3 and USP4. Interacts (when methylated at Lys-860) with L3MBTL1. Interacts with CHEK2; phosphorylates RB1. Interacts with CDK1 and CDK2. Interacts with PRMT2. Interacts with CEBPA. P-TEFB complex interacts with RB1; promotes phosphorylation of RB1. Interacts with RBBP9; the interaction disrupts RB1 binding to E2F1. Interacts with KAT2B/PCAF and EP300/P300. Interacts with PAX5. Interacts (phosphorylated and unphosphorylated) with BLCAP. May interact with NDC80. As to quaternary structure, (Microbial infection) Interacts with adenovirus E1A protein. (Microbial infection) Interacts with HPV E7 protein. In terms of assembly, (Microbial infection) Interacts with SV40 large T antigen. As to quaternary structure, (Microbial infection) Interacts with human cytomegalovirus/HHV-5 proteins UL82 and UL123. (Microbial infection) Interacts with molluscum contagiosum virus protein MC007. Post-translationally, phosphorylated by CDK6 and CDK4, and subsequently by CDK2 at Ser-567 in G1, thereby releasing E2F1 which is then able to activate cell growth. Dephosphorylated at the late M phase. SV40 large T antigen, HPV E7 and adenovirus E1A bind to the underphosphorylated, active form of pRb. Phosphorylation at Thr-821 and Thr-826 promotes interaction between the C-terminal domain C and the Pocket domain, and thereby inhibits interactions with heterodimeric E2F/DP transcription factor complexes. Dephosphorylated at Ser-795 by calcineruin upon calcium stimulation. CDK3/cyclin-C-mediated phosphorylation at Ser-807 and Ser-811 is required for G0-G1 transition. Phosphorylated by CDK1 and CDK2 upon TGFB1-mediated apoptosis. N-terminus is methylated by METTL11A/NTM1. Monomethylation at Lys-810 by SMYD2 enhances phosphorylation at Ser-807 and Ser-811, and promotes cell cycle progression. Monomethylation at Lys-860 by SMYD2 promotes interaction with L3MBTL1. In terms of processing, acetylated during keratinocyte differentiation. Acetylation at Lys-873 and Lys-874 regulates subcellular localization. Can be deacetylated by SIRT1. As to expression, expressed in the retina. Expressed in foreskin keratinocytes (at protein level).

The protein resides in the nucleus. The protein localises to the cytoplasm. Functionally, tumor suppressor that is a key regulator of the G1/S transition of the cell cycle. The hypophosphorylated form binds transcription regulators of the E2F family, preventing transcription of E2F-responsive genes. Both physically blocks E2Fs transactivating domain and recruits chromatin-modifying enzymes that actively repress transcription. Cyclin and CDK-dependent phosphorylation of RB1 induces its dissociation from E2Fs, thereby activating transcription of E2F responsive genes and triggering entry into S phase. RB1 also promotes the G0-G1 transition upon phosphorylation and activation by CDK3/cyclin-C. Directly involved in heterochromatin formation by maintaining overall chromatin structure and, in particular, that of constitutive heterochromatin by stabilizing histone methylation. Recruits and targets histone methyltransferases SUV39H1, KMT5B and KMT5C, leading to epigenetic transcriptional repression. Controls histone H4 'Lys-20' trimethylation. Inhibits the intrinsic kinase activity of TAF1. Mediates transcriptional repression by SMARCA4/BRG1 by recruiting a histone deacetylase (HDAC) complex to the c-FOS promoter. In resting neurons, transcription of the c-FOS promoter is inhibited by BRG1-dependent recruitment of a phospho-RB1-HDAC1 repressor complex. Upon calcium influx, RB1 is dephosphorylated by calcineurin, which leads to release of the repressor complex. Its function is as follows. (Microbial infection) In case of viral infections, interactions with SV40 large T antigen, HPV E7 protein or adenovirus E1A protein induce the disassembly of RB1-E2F1 complex thereby disrupting RB1's activity. The polypeptide is Retinoblastoma-associated protein (RB1) (Homo sapiens (Human)).